The primary structure comprises 104 residues: N(4)-acetylcytidine amidohydrolase (104 aa).

The ASCH domain occupies 6-96 (ITFYQRFEAD…TIYPNEHESW (91 aa)). The active-site Proton acceptor is the lysine 21. Threonine 24 functions as the Nucleophile in the catalytic mechanism. Glutamate 74 serves as the catalytic Proton donor.

It belongs to the N(4)-acetylcytidine amidohydrolase family.

The enzyme catalyses N(4)-acetylcytidine + H2O = cytidine + acetate + H(+). It carries out the reaction N(4)-acetyl-2'-deoxycytidine + H2O = 2'-deoxycytidine + acetate + H(+). It catalyses the reaction N(4)-acetylcytosine + H2O = cytosine + acetate + H(+). In terms of biological role, catalyzes the hydrolysis of N(4)-acetylcytidine (ac4C). The sequence is that of N(4)-acetylcytidine amidohydrolase from Haemophilus influenzae (strain 86-028NP).